The sequence spans 940 residues: Mating-type protein A-alpha Z4 (940 aa).

The homeobox; TALE-type DNA-binding region spans 110-182 (GAELSATPLP…AARARMGWGD (73 aa)). Disordered stretches follow at residues 333-618 (KQRQ…TGDP), 633-762 (PRDL…GLRP), 832-863 (GQKA…SSLV), and 877-912 (EAPK…DTVR). A compositionally biased stretch (basic and acidic residues) spans 337 to 360 (ARREQRRAQKDRMDAQRRAEDRKC). Acidic residues-rich tracts occupy residues 376 to 400 (ESDE…DGED) and 427 to 469 (ATED…EEEE). Composition is skewed to low complexity over residues 516-531 (PSSR…SPSP), 582-611 (VRSR…PSGG), and 657-693 (SRSL…SDAT). Positions 694-703 (DITEPDEATT) are enriched in acidic residues. Low complexity predominate over residues 704–724 (ADETTTQSTSASSSRDTTSQQ). A compositionally biased stretch (basic and acidic residues) spans 877-896 (EAPKPAKAPKNDRRYLERRE).

The protein belongs to the TALE/M-ATYP homeobox family.

The protein resides in the nucleus. Functionally, specifies A-alpha-4 mating-type. May regulate the expression of genes specific to the homokaryotic cell type. This Schizophyllum commune (Split gill fungus) protein is Mating-type protein A-alpha Z4.